The chain runs to 333 residues: MERVIQETDNDAFSCKISAITKRYLPSSEQKKIGNYEHYEDIHLEFCKEIKSRSRRKYANITKACRHSLPVMNYGTYLRTVSIDLKLTQWLKNNLENPADKVQVINLGCGSDLRMMTFLASFPGVQWLDLDYKDVVTFKSTILRSNAKFRASLQIEGDLPEEPSSIENVITDRYQLLPCNVTDDEQLIPILKKYTDFSVPAVILTECVLCYLHESKASQLISTVTGLYKQGYWISYDPIGGSQTNDRFGSIMQDNLMESRQLSMPTLMVFNSEDKYKERFPGKSEIQTMWDYYQNHLEDSERQRLKTLQFLDEIEELQVIFSHYVICTTNWRI.

Residues Arg-79, Gly-108, Asp-131, 180–181 (NV), and Glu-206 contribute to the S-adenosyl-L-methionine site.

It belongs to the methyltransferase superfamily. LCMT family.

The catalysed reaction is [phosphatase 2A protein]-C-terminal L-leucine + S-adenosyl-L-methionine = [phosphatase 2A protein]-C-terminal L-leucine methyl ester + S-adenosyl-L-homocysteine. In terms of biological role, methylates the carboxyl group of the C-terminal leucine residue of protein phosphatase 2A catalytic subunits to form alpha-leucine ester residues. The polypeptide is Leucine carboxyl methyltransferase 1 (PPM1) (Kluyveromyces lactis (strain ATCC 8585 / CBS 2359 / DSM 70799 / NBRC 1267 / NRRL Y-1140 / WM37) (Yeast)).